A 206-amino-acid chain; its full sequence is Large ribosomal subunit protein bL25 (206 aa).

This sequence belongs to the bacterial ribosomal protein bL25 family. CTC subfamily. As to quaternary structure, part of the 50S ribosomal subunit; part of the 5S rRNA/L5/L18/L25 subcomplex. Contacts the 5S rRNA. Binds to the 5S rRNA independently of L5 and L18.

Functionally, this is one of the proteins that binds to the 5S RNA in the ribosome where it forms part of the central protuberance. The polypeptide is Large ribosomal subunit protein bL25 (Paraburkholderia phytofirmans (strain DSM 17436 / LMG 22146 / PsJN) (Burkholderia phytofirmans)).